Consider the following 603-residue polypeptide: Adenine deaminase 1 (603 aa).

This sequence belongs to the metallo-dependent hydrolases superfamily. Adenine deaminase family. The cofactor is Mn(2+).

The catalysed reaction is adenine + H2O + H(+) = hypoxanthine + NH4(+). The polypeptide is Adenine deaminase 1 (Carboxydothermus hydrogenoformans (strain ATCC BAA-161 / DSM 6008 / Z-2901)).